The following is a 484-amino-acid chain: Zinc metalloproteinase-disintegrin stejnitin (484 aa).

A signal peptide spans 1–20; it reads MIQVLLVTICLAVFPYQGNS. Residues 21 to 192 constitute a propeptide that is removed on maturation; that stretch reads IILESGNVND…ASQLNLTPDE (172 aa). Gln-193 carries the pyrrolidone carboxylic acid modification. The Peptidase M12B domain occupies 194–392; sequence RFIELVIVAD…YTSRCLYNGP (199 aa). Residue Glu-197 participates in Ca(2+) binding. An N-linked (GlcNAc...) asparagine glycan is attached at Asn-254. Residue Asp-281 participates in Ca(2+) binding. 3 disulfide bridges follow: Cys-305/Cys-387, Cys-345/Cys-369, and Cys-347/Cys-352. Positions 330, 334, and 340 each coordinate Zn(2+). Ca(2+) contacts are provided by Cys-387, Asn-390, Val-402, Asn-405, Glu-409, Glu-412, and Asp-415. Residues 400–484 form the Disintegrin domain; that stretch reads PPVCGNYYVE…GDCPRNPFRA (85 aa). Intrachain disulfides connect Cys-403-Cys-422, Cys-414-Cys-432, Cys-416-Cys-427, Cys-426-Cys-449, Cys-440-Cys-446, Cys-445-Cys-470, and Cys-458-Cys-477. Residues 462–464 carry the Cell attachment site motif; sequence KGD.

The protein belongs to the venom metalloproteinase (M12B) family. P-II subfamily. P-IIb sub-subfamily. Zn(2+) serves as cofactor. In terms of processing, the N-terminus is blocked. As to expression, expressed by the venom gland.

It localises to the secreted. Functionally, snake venom zinc metalloproteinase that inhibits ADP-induced platelet aggregation in human platelet-rich plasma (IC(50) is 175 nM) and cleaves alpha-(FGA) and subsequently the beta-chain (FGG) of bovine fibrinogen, leaving the gamma-chain unaffected. It is also able to inhibit proliferatin of ECV304 cells by inducing apoptosis of these cells. The chain is Zinc metalloproteinase-disintegrin stejnitin from Trimeresurus stejnegeri (Chinese green tree viper).